The chain runs to 254 residues: Attacin-A (254 aa).

The first 18 residues, methionine 1–alanine 18, serve as a signal peptide directing secretion. Positions arginine 19–arginine 62 are excised as a propeptide.

It belongs to the attacin/sarcotoxin-2 family.

The protein resides in the secreted. In terms of biological role, hemolymph antibacterial protein. The chain is Attacin-A from Trichoplusia ni (Cabbage looper).